We begin with the raw amino-acid sequence, 305 residues long: Protein-methionine-sulfoxide reductase catalytic subunit MsrP (305 aa).

The tat-type signal signal peptide spans 1–54; sequence MLIRKPADHLPSEITSESVYFNRRQFMAGAAGLLLSAETLAGLAAKKSPLSQLA. Residues Asn-69, 72-73, Cys-126, Thr-161, Asn-209, Arg-214, and 225-227 contribute to the Mo-molybdopterin site; these read YE and SIK.

Belongs to the MsrP family. Heterodimer of a catalytic subunit (MsrP) and a heme-binding subunit (MsrQ). Mo-molybdopterin serves as cofactor. Post-translationally, predicted to be exported by the Tat system. The position of the signal peptide cleavage has not been experimentally proven.

Its subcellular location is the periplasm. It carries out the reaction L-methionyl-[protein] + a quinone + H2O = L-methionyl-(S)-S-oxide-[protein] + a quinol. The catalysed reaction is L-methionyl-[protein] + a quinone + H2O = L-methionyl-(R)-S-oxide-[protein] + a quinol. In terms of biological role, part of the MsrPQ system that repairs oxidized periplasmic proteins containing methionine sulfoxide residues (Met-O), using respiratory chain electrons. Thus protects these proteins from oxidative-stress damage caused by reactive species of oxygen and chlorine generated by the host defense mechanisms. MsrPQ is essential for the maintenance of envelope integrity under bleach stress, rescuing a wide series of structurally unrelated periplasmic proteins from methionine oxidation. The catalytic subunit MsrP is non-stereospecific, being able to reduce both (R-) and (S-) diastereoisomers of methionine sulfoxide. The polypeptide is Protein-methionine-sulfoxide reductase catalytic subunit MsrP (Chromobacterium violaceum (strain ATCC 12472 / DSM 30191 / JCM 1249 / CCUG 213 / NBRC 12614 / NCIMB 9131 / NCTC 9757 / MK)).